The chain runs to 311 residues: MTNPLYHKHIISINDLNRDDLESVLHVADKLKQHPNSQLLKDKVIASCFFEASTRTRLSFETAIHRLGASVVGFADGSNTSLGKKGETLADTISVLRTYADAIVIRHPQEGAARLASEFAGDIPVINAGDGANQHPSQTLLDLFTIKETQGRLDNLNIAMVGDLKYGRTVHSLAQALAKFTGNHLYFIAPKVLAMPEHILHLLEEHGVEYSQHETVDEVMSELDILYMTRVQKERLDPSEYANVKAQFILTSADLVNVKDNLKILHPLPRIDEITTDVDNTPYAYYFQQAGNGIYARQALLALVLNKNLVL.

Carbamoyl phosphate-binding residues include arginine 55 and threonine 56. Lysine 85 is a binding site for L-aspartate. The carbamoyl phosphate site is built by arginine 106, histidine 135, and glutamine 138. Residues arginine 168 and arginine 230 each coordinate L-aspartate. Residues leucine 268 and proline 269 each coordinate carbamoyl phosphate.

Belongs to the aspartate/ornithine carbamoyltransferase superfamily. ATCase family. As to quaternary structure, heterododecamer (2C3:3R2) of six catalytic PyrB chains organized as two trimers (C3), and six regulatory PyrI chains organized as three dimers (R2).

It catalyses the reaction carbamoyl phosphate + L-aspartate = N-carbamoyl-L-aspartate + phosphate + H(+). The protein operates within pyrimidine metabolism; UMP biosynthesis via de novo pathway; (S)-dihydroorotate from bicarbonate: step 2/3. Functionally, catalyzes the condensation of carbamoyl phosphate and aspartate to form carbamoyl aspartate and inorganic phosphate, the committed step in the de novo pyrimidine nucleotide biosynthesis pathway. The chain is Aspartate carbamoyltransferase catalytic subunit from Proteus mirabilis (strain HI4320).